The sequence spans 346 residues: tRNA N6-adenosine threonylcarbamoyltransferase (346 aa).

Positions 111 and 115 each coordinate Fe cation. Substrate contacts are provided by residues 134–138, Asp-167, Gly-180, Asp-184, and Asn-280; that span reads LVSGG. A Fe cation-binding site is contributed by Asp-308.

The protein belongs to the KAE1 / TsaD family. It depends on Fe(2+) as a cofactor.

It is found in the cytoplasm. It catalyses the reaction L-threonylcarbamoyladenylate + adenosine(37) in tRNA = N(6)-L-threonylcarbamoyladenosine(37) in tRNA + AMP + H(+). Required for the formation of a threonylcarbamoyl group on adenosine at position 37 (t(6)A37) in tRNAs that read codons beginning with adenine. Is involved in the transfer of the threonylcarbamoyl moiety of threonylcarbamoyl-AMP (TC-AMP) to the N6 group of A37, together with TsaE and TsaB. TsaD likely plays a direct catalytic role in this reaction. The protein is tRNA N6-adenosine threonylcarbamoyltransferase of Crocosphaera subtropica (strain ATCC 51142 / BH68) (Cyanothece sp. (strain ATCC 51142)).